The sequence spans 348 residues: Glycerol-1-phosphate dehydrogenase [NAD(P)+] (348 aa).

NAD(+) contacts are provided by residues 94–98 and 116–119; these read GKVID and TTAS. Substrate is bound at residue D121. Residue S125 participates in NAD(+) binding. D168 lines the substrate pocket. Residues D168 and H248 each contribute to the Zn(2+) site. H252 contributes to the substrate binding site. H264 provides a ligand contact to Zn(2+).

The protein belongs to the glycerol-1-phosphate dehydrogenase family. As to quaternary structure, homooctamer. Requires Zn(2+) as cofactor.

It localises to the cytoplasm. The enzyme catalyses sn-glycerol 1-phosphate + NAD(+) = dihydroxyacetone phosphate + NADH + H(+). It catalyses the reaction sn-glycerol 1-phosphate + NADP(+) = dihydroxyacetone phosphate + NADPH + H(+). The protein operates within membrane lipid metabolism; glycerophospholipid metabolism. Catalyzes the NAD(P)H-dependent reduction of dihydroxyacetonephosphate (DHAP or glycerone phosphate) to glycerol 1-phosphate (G1P). The G1P thus generated is used as the glycerophosphate backbone of phospholipids in the cellular membranes of Archaea. This chain is Glycerol-1-phosphate dehydrogenase [NAD(P)+], found in Methanobrevibacter smithii (strain ATCC 35061 / DSM 861 / OCM 144 / PS).